The chain runs to 151 residues: Probable cGMP 3',5'-cyclic phosphodiesterase subunit delta (151 aa).

Belongs to the PDE6D/unc-119 family. As to quaternary structure, interacts with Pde6.

The protein resides in the nucleus. It localises to the cytoplasm. The polypeptide is Probable cGMP 3',5'-cyclic phosphodiesterase subunit delta (Drosophila willistoni (Fruit fly)).